We begin with the raw amino-acid sequence, 168 residues long: NADH-ubiquinone oxidoreductase chain 6 (168 aa).

5 helical membrane passes run 1-21 (MKMM…VAFA), 27-47 (IYGG…VVSL), 50-70 (VFLG…VFGY), 87-107 (VVAF…YFMS), and 143-163 (WALA…LEVV).

Belongs to the complex I subunit 6 family. Core subunit of respiratory chain NADH dehydrogenase (Complex I) which is composed of 45 different subunits.

It localises to the mitochondrion inner membrane. The enzyme catalyses a ubiquinone + NADH + 5 H(+)(in) = a ubiquinol + NAD(+) + 4 H(+)(out). In terms of biological role, core subunit of the mitochondrial membrane respiratory chain NADH dehydrogenase (Complex I) which catalyzes electron transfer from NADH through the respiratory chain, using ubiquinone as an electron acceptor. Essential for the catalytic activity and assembly of complex I. The polypeptide is NADH-ubiquinone oxidoreductase chain 6 (MT-ND6) (Didelphis virginiana (North American opossum)).